A 264-amino-acid chain; its full sequence is Putative hydro-lyase cgR_2449 (264 aa).

Belongs to the D-glutamate cyclase family.

The polypeptide is Putative hydro-lyase cgR_2449 (Corynebacterium glutamicum (strain R)).